A 627-amino-acid polypeptide reads, in one-letter code: Ski protein homolog (627 aa).

Over residues 1 to 12 (MSDSPIGSSQQV) the composition is skewed to polar residues. Disordered stretches follow at residues 1–22 (MSDSPIGSSQQVEPEHRTPDLM), 34–58 (LHEETRSDDDDDGQPSTSAKRKDSR), and 299–318 (EYDEAAPHQAPPKRPAMETP).

The protein belongs to the SKI family. In terms of assembly, may interact with daf-3. In terms of tissue distribution, expressed in ganglia in the head and tail and in the anterior pharynx.

It is found in the nucleus. Its function is as follows. Probable component of transcriptional regulatory complex with SMAD protein daf-3. Required to regulate entry into a developmentally arrested larval state known as dauer, in response to harsh environmental conditions. Involved in larvae undergoing cell-cycle arrest during the dauer stage. This Caenorhabditis elegans protein is Ski protein homolog.